A 353-amino-acid polypeptide reads, in one-letter code: MGNEEAFTFALAMATGSFANMVLRAVVELDVFEIMKRAGPGTHLSAAEIAAHLPTKNPDANAMLDRMLRVLAGYEVLSCSNRSLPNGQVERLYGLSPVSQFFTKSEDGASLAPLCLLNQDKVYWESWYHLKDAVLDGGIAFNRAHNLTLYEYAGIDDRFNKVFNDGMSGCSTTIMKKMVENYKGFEGVSTLVDVAGGIGKNLNMIISKYPTIKGINFDLPHVIKDAPRCRGVENIGGDMFISVPQGDAIFIKWICCDWNDEHCLKFLKNCYAALPDHGKVILYEFIFPKASETSYAARVILNIDAVTLATVVGGRIRTEAEFEALAKGAGFEGFKMAYSTSEVDAVMEFLKKK.

Positions 171, 195, 218, 238, and 252 each coordinate S-adenosyl-L-homocysteine. Asp218 is an S-adenosyl-L-methionine binding site.

This sequence belongs to the class I-like SAM-binding methyltransferase superfamily. Cation-independent O-methyltransferase family. As to quaternary structure, homodimer. As to expression, expressed at high levels in all tissues.

It catalyses the reaction 3-methoxytyramine + S-adenosyl-L-methionine = N-methyl-3-methoxytyramine + S-adenosyl-L-homocysteine + H(+). It carries out the reaction mescaline + S-adenosyl-L-methionine = N-methylmescaline + S-adenosyl-L-homocysteine + H(+). The catalysed reaction is tyramine + S-adenosyl-L-methionine = N-methyltyramine + S-adenosyl-L-homocysteine + H(+). The enzyme catalyses 4-hydroxy-3,5-dimethoxyphenethylamine + S-adenosyl-L-methionine = N-methyl-4-hydroxy-3,5-dimethoxyphenethylamine + S-adenosyl-L-homocysteine + H(+). The protein operates within aromatic compound metabolism. It participates in alkaloid biosynthesis. Functionally, N-methyltransferase participating in the biosynthesis of natural products derived from phenylethylamine, including mescaline, a natural hallucinogen potentially used in psychotherapeutic treatments. Catalyzes the N-methylation of many substrates, including 3-methoxytyramine, 5-hydroxy-3,4-dimethoxyphenethylamine, 4-hydroxy-3,5-dimethoxyphenethylamine, tyramine and mescaline. This is N-methyltransferase from Lophophora williamsii (Peyote).